The primary structure comprises 918 residues: Chaperone protein ClpC4, chloroplastic (918 aa).

An i region spans residues 266 to 515; the sequence is LMEYGTNLTK…RLRNAQCKPS (250 aa). Residues 311–318 and 653–660 each bind ATP; these read GEPGVGKT and GPTGVGKS. The tract at residues 579 to 774 is II; it reads VTEDDVRHAI…LIVMTTNIGS (196 aa).

Belongs to the ClpA/ClpB family. ClpC subfamily.

The protein resides in the plastid. It localises to the chloroplast. In terms of biological role, molecular chaperone that may interact with a ClpP-like protease involved in degradation of denatured proteins in the chloroplast. This is Chaperone protein ClpC4, chloroplastic (CPLC4) from Oryza sativa subsp. japonica (Rice).